We begin with the raw amino-acid sequence, 195 residues long: Imidazoleglycerol-phosphate dehydratase (195 aa).

The protein belongs to the imidazoleglycerol-phosphate dehydratase family.

The protein localises to the cytoplasm. The catalysed reaction is D-erythro-1-(imidazol-4-yl)glycerol 3-phosphate = 3-(imidazol-4-yl)-2-oxopropyl phosphate + H2O. It participates in amino-acid biosynthesis; L-histidine biosynthesis; L-histidine from 5-phospho-alpha-D-ribose 1-diphosphate: step 6/9. This Cupriavidus metallidurans (strain ATCC 43123 / DSM 2839 / NBRC 102507 / CH34) (Ralstonia metallidurans) protein is Imidazoleglycerol-phosphate dehydratase.